Here is a 447-residue protein sequence, read N- to C-terminus: Polyamine export protein (447 aa).

Topologically, residues Met1–Ser4 are cytoplasmic. The CNNM transmembrane domain maps to Met1–Glu197. The helical transmembrane segment at Ile5–Leu25 threads the bilayer. The Periplasmic portion of the chain corresponds to Ala26–Pro54. The helical transmembrane segment at Gly55–Val75 threads the bilayer. The Cytoplasmic portion of the chain corresponds to Gly76–Gln99. A helical transmembrane segment spans residues Leu100–Thr120. Topologically, residues Pro121–Arg141 are periplasmic. The helical transmembrane segment at Phe142 to Phe162 threads the bilayer. The Cytoplasmic portion of the chain corresponds to Arg163–Ala447. CBS domains are found at residues Met216 to Met275 and Gln282 to Glu343.

It belongs to the UPF0053 family. PaeA subfamily.

The protein localises to the cell inner membrane. In terms of biological role, involved in cadaverine and putrescine tolerance in stationary phase. May facilitate the efflux of both cadaverine and putrescine from the cytoplasm, reducing potentially toxic levels under certain stress conditions. This is Polyamine export protein from Salmonella typhimurium (strain 14028s / SGSC 2262).